Reading from the N-terminus, the 509-residue chain is Phosphoprotein (509 aa).

3 disordered regions span residues 33–84 (LESW…LGFR), 131–236 (VQAN…DGNS), and 256–281 (PESRWESSERNASVGSVPKSARSAKT). The span at 44–65 (GRATPNPDTSEGDHQNINQSCS) shows a compositional bias: polar residues. Positions 146–157 (DGSDDSDVDSGP) are enriched in acidic residues. S151 bears the Phosphoserine mark. Residues 178–187 (RSTDVEKLEG) show a composition bias toward basic and acidic residues. Polar residues predominate over residues 221-236 (SRPSAQSIKKGTDGNS). The tract at residues 303–376 (SEFEYEDDLF…LSSIMIAIPG (74 aa)) is multimerization. Residues 459–509 (SSRSVIRSIIKSSKLNIDHKDYLLDLLNDVKGSKDLKEFHKMLTAILAKQP) are interaction with the nucleocapsid (N-RNA).

Belongs to the morbillivirus P protein family. As to quaternary structure, homotetramer. Interacts (via multimerization domain) with polymerase L; this interaction forms the polymerase L-P complex. Interacts (via N-terminus) with N0 (via Ncore); this interaction allows P to chaperon N0 to avoid N polymerization before encapsidation. Interacts (via C-terminus) with N-RNA template; this interaction positions the polymerase on the template for both transcription and replication. Interacts with host ISG15; this interaction disrupts the activity of the N0-P complex. In terms of processing, phosphorylation on serines by host CK2 is necessary for the formation of viral factories.

Its function is as follows. Essential cofactor of the RNA polymerase L that plays a central role in the transcription and replication by forming the polymerase complex with RNA polymerase L and recruiting L to the genomic N-RNA template for RNA synthesis. Also plays a central role in the encapsidation of nascent RNA chains by forming the encapsidation complex with the nucleocapsid protein N (N-P complex). Acts as a chaperone for newly synthesized free N protein, so-called N0, allowing encapsidation of nascent RNA chains during replication. The nucleoprotein protein N prevents excessive phosphorylation of P, which leads to down-regulation of viral transcription/ replication. Participates, together with N, in the formation of viral factories (viroplasms), which are large inclusions in the host cytoplasm where replication takes place. This chain is Phosphoprotein (P/V), found in Capra hircus (Goat).